Reading from the N-terminus, the 388-residue chain is tRNA 2-selenouridine synthase (388 aa).

The Rhodanese domain occupies 15-138 (FTADTPLIDV…ARQFLINTID (124 aa)). Cys98 acts as the S-selanylcysteine intermediate in catalysis.

It belongs to the SelU family. As to quaternary structure, monomer.

It carries out the reaction 5-methylaminomethyl-2-thiouridine(34) in tRNA + selenophosphate + (2E)-geranyl diphosphate + H2O + H(+) = 5-methylaminomethyl-2-selenouridine(34) in tRNA + (2E)-thiogeraniol + phosphate + diphosphate. It catalyses the reaction 5-methylaminomethyl-2-thiouridine(34) in tRNA + (2E)-geranyl diphosphate = 5-methylaminomethyl-S-(2E)-geranyl-thiouridine(34) in tRNA + diphosphate. The enzyme catalyses 5-methylaminomethyl-S-(2E)-geranyl-thiouridine(34) in tRNA + selenophosphate + H(+) = 5-methylaminomethyl-2-(Se-phospho)selenouridine(34) in tRNA + (2E)-thiogeraniol. The catalysed reaction is 5-methylaminomethyl-2-(Se-phospho)selenouridine(34) in tRNA + H2O = 5-methylaminomethyl-2-selenouridine(34) in tRNA + phosphate. Its function is as follows. Involved in the post-transcriptional modification of the uridine at the wobble position (U34) of tRNA(Lys), tRNA(Glu) and tRNA(Gln). Catalyzes the conversion of 2-thiouridine (S2U-RNA) to 2-selenouridine (Se2U-RNA). Acts in a two-step process involving geranylation of 2-thiouridine (S2U) to S-geranyl-2-thiouridine (geS2U) and subsequent selenation of the latter derivative to 2-selenouridine (Se2U) in the tRNA chain. The sequence is that of tRNA 2-selenouridine synthase from Nitrosomonas eutropha (strain DSM 101675 / C91 / Nm57).